The following is a 618-amino-acid chain: DNA mismatch repair protein MutL (618 aa).

The segment covering Glu367–Gly381 has biased composition (low complexity). A disordered region spans residues Glu367–Gly402. The segment covering Gly382–Ser392 has biased composition (gly residues).

This sequence belongs to the DNA mismatch repair MutL/HexB family.

In terms of biological role, this protein is involved in the repair of mismatches in DNA. It is required for dam-dependent methyl-directed DNA mismatch repair. May act as a 'molecular matchmaker', a protein that promotes the formation of a stable complex between two or more DNA-binding proteins in an ATP-dependent manner without itself being part of a final effector complex. The chain is DNA mismatch repair protein MutL from Salmonella gallinarum (strain 287/91 / NCTC 13346).